We begin with the raw amino-acid sequence, 151 residues long: Large ribosomal subunit protein bL9 (151 aa).

It belongs to the bacterial ribosomal protein bL9 family.

Its function is as follows. Binds to the 23S rRNA. This chain is Large ribosomal subunit protein bL9, found in Mycolicibacterium smegmatis (strain ATCC 700084 / mc(2)155) (Mycobacterium smegmatis).